Reading from the N-terminus, the 192-residue chain is Pyridoxal 5'-phosphate synthase subunit PdxT (192 aa).

Glycine 47–serine 49 is a binding site for L-glutamine. Cysteine 78 functions as the Nucleophile in the catalytic mechanism. Residues arginine 105 and isoleucine 139–arginine 140 contribute to the L-glutamine site. Active-site charge relay system residues include histidine 175 and glutamate 177.

Belongs to the glutaminase PdxT/SNO family. In the presence of PdxS, forms a dodecamer of heterodimers. Only shows activity in the heterodimer.

The enzyme catalyses aldehydo-D-ribose 5-phosphate + D-glyceraldehyde 3-phosphate + L-glutamine = pyridoxal 5'-phosphate + L-glutamate + phosphate + 3 H2O + H(+). The catalysed reaction is L-glutamine + H2O = L-glutamate + NH4(+). It participates in cofactor biosynthesis; pyridoxal 5'-phosphate biosynthesis. Catalyzes the hydrolysis of glutamine to glutamate and ammonia as part of the biosynthesis of pyridoxal 5'-phosphate. The resulting ammonia molecule is channeled to the active site of PdxS. In Solibacter usitatus (strain Ellin6076), this protein is Pyridoxal 5'-phosphate synthase subunit PdxT.